The following is a 1242-amino-acid chain: Insulin receptor substrate 1 (1242 aa).

Ser-3 carries the phosphoserine modification. The interval 3-137 is mediates interaction with PHIP; the sequence is SPPESDGFSD…GAGGGGGSCS (135 aa). Positions 12-115 constitute a PH domain; the sequence is DVRKVGYLRK…WYQALLQLHN (104 aa). Position 99 is a phosphoserine; by CK2 (Ser-99). The IRS-type PTB domain occupies 160–264; it reads FKEVWQVILK…EAMRAMSDEF (105 aa). Positions 262–430 are disordered; sequence DEFRPRSKSQ…SDGGFISSDE (169 aa). Residues 269-281 show a composition bias toward low complexity; it reads KSQSSSNCSNPIS. A phosphoserine; by RPS6KB1 mark is found at Ser-270 and Ser-307. Ser-312 is modified (phosphoserine; by IKKB, MAPK8 and RPS6KB1). A phosphoserine mark is found at Ser-315, Ser-323, Ser-330, Ser-345, and Ser-348. Basic residues predominate over residues 354-363; the sequence is THAHRHRGSA. Low complexity-rich tracts occupy residues 383-404 and 412-424; these read SPSATSPVSLSSSSTSGHGSTS and SSASVSGSPSDGG. Ser-419 carries the phosphoserine modification. A phosphothreonine mark is found at Thr-446 and Thr-453. Tyr-465 carries the post-translational modification Phosphotyrosine; by INSR. The YXXM motif 1 motif lies at 465-468; it reads YICM. Ser-527 carries the post-translational modification Phosphoserine; by RPS6KB1. The short motif at 551–554 is the YXXM motif 2 element; it reads YTEM. Positions 592 to 610 are enriched in basic and acidic residues; the sequence is LERRGGHHRPDSSTLHTDD. The disordered stretch occupies residues 592–616; sequence LERRGGHHRPDSSTLHTDDGYMPMS. Phosphotyrosine; by INSR is present on Tyr-612. The YXXM motif 3 motif lies at 612–615; it reads YMPM. A phosphoserine mark is found at Ser-616 and Ser-629. Tyr-632 is subject to Phosphotyrosine; by INSR. The YXXM motif 4 motif lies at 632-635; the sequence is YMPM. Ser-636 is subject to Phosphoserine; by RPS6KB1. Tyr-662 carries the post-translational modification Phosphotyrosine. A YXXM motif 5 motif is present at residues 662–665; the sequence is YMMM. The disordered stretch occupies residues 668–693; it reads SGGCSPDIGGGPSSSSSSSNAVPSGT. The YXXM motif 6 signature appears at 732–735; it reads YMNM. 2 disordered regions span residues 771 to 900 and 918 to 937; these read FKHT…VNIE and SPSVRCPSQLQPAPREEETG. Positions 776-785 are enriched in basic and acidic residues; the sequence is RPGEPEEGAR. Ser-794 is modified (phosphoserine; by AMPK and SIK2). The span at 801-815 shows a compositional bias: low complexity; sequence AATADDSSSSTSSDS. At Ser-892 the chain carries Phosphoserine. At Tyr-896 the chain carries Phosphotyrosine; by INSR. The GRB2-binding stretch occupies residues 896–898; it reads YVN. Residues 918–928 are compositionally biased toward polar residues; sequence SPSVRCPSQLQ. Tyr-941 and Tyr-989 each carry phosphotyrosine; by INSR. 3 consecutive short sequence motifs (YXXM motif) follow at residues 941-944, 989-992, and 1012-1015; these read YMKM, YMTM, and YADM. Residues 1057–1146 form a disordered region; sequence SSLLGGPQGP…DVKRHSSASF (90 aa). Residues 1073-1085 are compositionally biased toward polar residues; that stretch reads TRVNLSPNRNQSA. Ser-1100 carries the phosphoserine modification. At Ser-1101 the chain carries Phosphoserine; by RPS6KB1 and PKC/PRKCQ. Over residues 1102 to 1114 the composition is skewed to polar residues; the sequence is ETFSSTPSATRVG. The residue at position 1179 (Tyr-1179) is a Phosphotyrosine; by INSR. Residues Lys-1186 and Lys-1189 each participate in a glycyl lysine isopeptide (Lys-Gly) (interchain with G-Cter in ubiquitin) cross-link. Positions 1190–1242 are disordered; that stretch reads QCPQECTPEPQPPPPPPPHQPLGSGESSSTRRSSEDLSAYASISFQKQPEDRQ. Residues 1198-1209 show a composition bias toward pro residues; sequence EPQPPPPPPPHQ. Low complexity predominate over residues 1210-1220; that stretch reads PLGSGESSSTR. The residue at position 1229 (Tyr-1229) is a Phosphotyrosine; by INSR.

As to quaternary structure, interacts with UBTF and PIK3CA. Interacts (via phosphorylated YXXM motifs) with PIK3R1. Interacts with ROCK1 and FER. Interacts (via PH domain) with PHIP. Interacts with GRB2. Interacts with SOCS7. Interacts (via IRS-type PTB domain) with IGF1R and INSR (via the tyrosine-phosphorylated NPXY motif). Interacts with ALK. Interacts with EIF2AK2/PKR. Interacts with GKAP1. Interacts with DGKZ in the absence of insulin; insulin stimulation decreases this interaction. Found in a ternary complex with DGKZ and PIP5K1A in the absence of insulin stimulation. Interacts with SQSTM1; the interaction is disrupted by the presence of tensin TNS2. Interacts with NCK1 (via SH2 domain). Interacts with NCK2 (via SH3 domain). Interacts with SH2B1; this interaction enhances leptin-induced activation of the PI3-kinase pathway. Interacts with DVL2; this interaction promotes the Wnt/beta-catenin signaling pathway. In terms of processing, serine phosphorylation of IRS1 is a mechanism for insulin resistance. Ser-307, Ser-312, Ser-315, and Ser-323 phosphorylations inhibit insulin action through disruption of IRS1 interaction with the insulin receptor INSR. Phosphorylation of Tyr-896 is required for GRB2-binding. Phosphorylated by ALK. Phosphorylated at Ser-270, Ser-307, Ser-636 and Ser-1101 by RPS6KB1; phosphorylation induces accelerated degradation of IRS1. Phosphorylated on tyrosine residues in response to insulin. In skeletal muscles, dephosphorylated on Tyr-612 by TNS2 under anabolic conditions; dephosphorylation results in the proteasomal degradation of IRS1. Ubiquitinated by the Cul7-RING(FBXW8) complex in a mTOR-dependent manner, leading to its degradation: the Cul7-RING(FBXW8) complex recognizes and binds IRS1 previously phosphorylated by S6 kinase (RPS6KB1 or RPS6KB2). Ubiquitinated by TRAF4 through 'Lys-29' linkage; this ubiquitination regulates the interaction of IRS1 with IGFR and IRS1 tyrosine phosphorylation upon IGF1 stimulation. Post-translationally, S-nitrosylation at by BLVRB inhibits its activity.

The protein resides in the cytoplasm. Its subcellular location is the nucleus. Its function is as follows. Signaling adapter protein that participates in the signal transduction from two prominent receptor tyrosine kinases, insulin receptor/INSR and insulin-like growth factor I receptor/IGF1R. Plays therefore an important role in development, growth, glucose homeostasis as well as lipid metabolism. Upon phosphorylation by the insulin receptor, functions as a signaling scaffold that propagates insulin action through binding to SH2 domain-containing proteins including the p85 regulatory subunit of PI3K, NCK1, NCK2, GRB2 or SHP2. Recruitment of GRB2 leads to the activation of the guanine nucleotide exchange factor SOS1 which in turn triggers the Ras/Raf/MEK/MAPK signaling cascade. Activation of the PI3K/AKT pathway is responsible for most of insulin metabolic effects in the cell, and the Ras/Raf/MEK/MAPK is involved in the regulation of gene expression and in cooperation with the PI3K pathway regulates cell growth and differentiation. Acts a positive regulator of the Wnt/beta-catenin signaling pathway through suppression of DVL2 autophagy-mediated degradation leading to cell proliferation. The sequence is that of Insulin receptor substrate 1 (IRS1) from Homo sapiens (Human).